We begin with the raw amino-acid sequence, 1226 residues long: Arf guanine nucleotide exchange factor SYT1 (1226 aa).

Disordered regions lie at residues 17–39 (HSNDKNGNKKGGSNVSTGIDKLR) and 113–158 (RNGQ…RNSK). The segment covering 131-142 (SIEKVPKPDGER) has biased composition (basic and acidic residues). Threonine 277 carries the phosphothreonine modification. Disordered regions lie at residues 311–405 (NSLM…TGMS), 954–1022 (STGS…NEDY), and 1178–1198 (LEHGKGEEEGQGNNDDSDGID). Residues 349–360 (LSRSRSQSTSFV) show a composition bias toward polar residues. Serine 369 bears the Phosphoserine mark. Polar residues predominate over residues 386 to 405 (GPTSVYNNKSNANSTITGMS). The SEC7 domain maps to 405-620 (SRRSSSIVNA…TYFYENVTAK (216 aa)). One can recognise a PH domain in the interval 844-1074 (ILQMGAIMNL…DSINLFSAYD (231 aa)). 2 stretches are compositionally biased toward low complexity: residues 956 to 969 (GSHTSNTTAASSSA) and 994 to 1017 (SSVSNGESDNDSVSSSDNQLSSND).

It is found in the cytoplasm. Its activity is regulated as follows. Inhibited by brefeldin A. In terms of biological role, guanine nucleotide exchange factor for Arf GTPases, stimulating the nucleotide exchange from the GDP-bound to the GTP-bound form. Catalyzes both the GDP release by and the GTP binding to ARF2. Has no exchange activity on Rab GTPases. Involved in vesicular transport. The chain is Arf guanine nucleotide exchange factor SYT1 (SYT1) from Saccharomyces cerevisiae (strain ATCC 204508 / S288c) (Baker's yeast).